Consider the following 451-residue polypeptide: Tubby-like F-box protein 12 (451 aa).

The F-box domain occupies 57–112; that stretch reads SRWVGLPPELLRDVMKRLEEGESNWPSRKDVVACAAVCRTWREICKDIVQSPEICG. Positions 387 to 406 are enriched in low complexity; it reads LEQQQQQQQQNHASSSSSAS. Residues 387–407 are disordered; sequence LEQQQQQQQQNHASSSSSASD.

This sequence belongs to the TUB family. In terms of tissue distribution, ubiquitous.

This is Tubby-like F-box protein 12 (TULP12) from Oryza sativa subsp. japonica (Rice).